The sequence spans 215 residues: Ribosomal RNA small subunit methyltransferase G (215 aa).

S-adenosyl-L-methionine contacts are provided by residues G78, L83, 128–129 (AE), and R146.

Belongs to the methyltransferase superfamily. RNA methyltransferase RsmG family.

It is found in the cytoplasm. The catalysed reaction is guanosine(527) in 16S rRNA + S-adenosyl-L-methionine = N(7)-methylguanosine(527) in 16S rRNA + S-adenosyl-L-homocysteine. Its function is as follows. Specifically methylates the N7 position of guanine in position 527 of 16S rRNA. This Anaeromyxobacter dehalogenans (strain 2CP-1 / ATCC BAA-258) protein is Ribosomal RNA small subunit methyltransferase G.